A 635-amino-acid polypeptide reads, in one-letter code: Biosynthetic arginine decarboxylase (635 aa).

Position 100 is an N6-(pyridoxal phosphate)lysine (lysine 100). A substrate-binding site is contributed by 282–292 (LDIGGGLGVDY).

This sequence belongs to the Orn/Lys/Arg decarboxylase class-II family. SpeA subfamily. Mg(2+) serves as cofactor. The cofactor is pyridoxal 5'-phosphate.

The enzyme catalyses L-arginine + H(+) = agmatine + CO2. The protein operates within amine and polyamine biosynthesis; agmatine biosynthesis; agmatine from L-arginine: step 1/1. Functionally, catalyzes the biosynthesis of agmatine from arginine. In Geobacter sp. (strain M21), this protein is Biosynthetic arginine decarboxylase.